Consider the following 501-residue polypeptide: Probable sucrose utilization protein SUC1 (501 aa).

The segment at residues 13–39 is a DNA-binding region (zn(2)-C6 fungal-type); the sequence is CDSCSFRKVKCDMKTPCSRCVLNNLKC.

The protein belongs to the MAL13 family.

The protein localises to the nucleus. Functionally, affects sucrose utilization and alpha-glucosidase activity. Probable transcriptional activator. The protein is Probable sucrose utilization protein SUC1 (SUC1) of Candida albicans (strain SC5314 / ATCC MYA-2876) (Yeast).